We begin with the raw amino-acid sequence, 477 residues long: MIGLIIVSHSKLLADGLHQLAAQMQNKQKCHIITAAGVDDETHPIGTDAVKVMEAIESLSDAEHIILLMDLGSALLSAETALDLIDPDLAEKVHLCSAPLVEGAIAITAAASGGASIDEILNEAQQALQAKQQQLNDTVTTTENEKDKHTHFSEQALTTQWVVKNPSGLHIRPAAKLATLLSGFTATLELRHGEKRADAKSMNQIALLQVRQGDKITLVAEGVDSQNAINAFNQLAQHNFGDNIATTDSKTFVGKTAYVPTVAGLAHHHAPNTELCISSYQTSENETRRATKAIEQLKTHLDSLANTLNEQYGEEIANIFRGHRLLLEDDELVESITQSIENECNTAYDAISNIFNNMSKQYQQLDDEYLQARFIDIEDLKNQLLMSISSVAQPSCAFTEPTIILSGNLGPSELLRYRNTNVVGVALANGSPYSHTCIIAAKMGLPILTDLGDNIHQIAEQTKLQLSIETRSLIVAS.

The PTS EIIA type-4 domain maps to 1 to 135; that stretch reads MIGLIIVSHS…QALQAKQQQL (135 aa). Histidine 9 acts as the Tele-phosphohistidine intermediate in catalysis. In terms of domain architecture, HPr spans 156–243; the sequence is ALTTQWVVKN…QLAQHNFGDN (88 aa). Histidine 170 (pros-phosphohistidine intermediate) is an active-site residue. The tract at residues 269-477 is PTS EI-like, N-terminal part; that stretch reads HAPNTELCIS…IETRSLIVAS (209 aa). Catalysis depends on histidine 435, which acts as the Tele-phosphohistidine intermediate.

The protein belongs to the PEP-utilizing enzyme family. As to quaternary structure, homodimer. The dihydroxyacetone kinase complex is composed of a homodimer of DhaM, a homodimer of DhaK and the subunit DhaL.

It catalyses the reaction dihydroxyacetone + phosphoenolpyruvate = dihydroxyacetone phosphate + pyruvate. Component of the dihydroxyacetone kinase complex, which is responsible for the phosphoenolpyruvate (PEP)-dependent phosphorylation of dihydroxyacetone. DhaM serves as the phosphoryl donor. Is phosphorylated by phosphoenolpyruvate in an EI- and HPr-dependent reaction, and a phosphorelay system on histidine residues finally leads to phosphoryl transfer to DhaL and dihydroxyacetone. The sequence is that of PEP-dependent dihydroxyacetone kinase, phosphoryl donor subunit DhaM from Providencia stuartii (strain MRSN 2154).